Reading from the N-terminus, the 385-residue chain is Protein kup-1 (385 aa).

2 disordered regions span residues 1 to 20 (MDDE…VRED) and 326 to 385 (SLAS…PDEY). Composition is skewed to basic and acidic residues over residues 8-20 (GSDH…VRED), 339-351 (RTDE…DDIV), and 364-385 (GRVE…PDEY).

The sequence is that of Protein kup-1 (kup-1) from Caenorhabditis elegans.